The sequence spans 102 residues: Flagellar hook-basal body complex protein FliE (102 aa).

It belongs to the FliE family.

The protein resides in the bacterial flagellum basal body. This is Flagellar hook-basal body complex protein FliE from Halalkalibacterium halodurans (strain ATCC BAA-125 / DSM 18197 / FERM 7344 / JCM 9153 / C-125) (Bacillus halodurans).